We begin with the raw amino-acid sequence, 283 residues long: Elongation factor Ts (283 aa).

Positions 79–82 (TDFV) are involved in Mg(2+) ion dislocation from EF-Tu.

This sequence belongs to the EF-Ts family.

The protein localises to the cytoplasm. Associates with the EF-Tu.GDP complex and induces the exchange of GDP to GTP. It remains bound to the aminoacyl-tRNA.EF-Tu.GTP complex up to the GTP hydrolysis stage on the ribosome. This is Elongation factor Ts from Shewanella sp. (strain ANA-3).